The chain runs to 216 residues: MVSFVHVISVESNTAEIVDSVKMSGHPIHKAYLIFDSEESKKYVDEVKGTLSSLVEVEVLELKSDGVYEAVVDILRTVRKEVDAGNTVLFNITDSDKLTCLACFISAQISESKIYTKKGDSVIEIPTPPIKKVNEDKLEILRALEREGGSVDSINKLIELVEGKLEEQKKYMAQRARMSYHLNGLEEDGLVVTERKGKNLSIFLTELGKAFVAMFG.

This is an uncharacterized protein from Archaeoglobus fulgidus (strain ATCC 49558 / DSM 4304 / JCM 9628 / NBRC 100126 / VC-16).